Reading from the N-terminus, the 282-residue chain is D-alanine aminotransferase (282 aa).

Tyrosine 32 is a substrate binding site. Residue arginine 51 coordinates pyridoxal 5'-phosphate. Substrate is bound by residues arginine 99 and histidine 101. Lysine 146 serves as the catalytic Proton acceptor. N6-(pyridoxal phosphate)lysine is present on lysine 146. Residue glutamate 178 coordinates pyridoxal 5'-phosphate.

Belongs to the class-IV pyridoxal-phosphate-dependent aminotransferase family. In terms of assembly, homodimer. The cofactor is pyridoxal 5'-phosphate.

The enzyme catalyses D-alanine + 2-oxoglutarate = D-glutamate + pyruvate. In terms of biological role, acts on the D-isomers of alanine, leucine, aspartate, glutamate, aminobutyrate, norvaline and asparagine. The enzyme transfers an amino group from a substrate D-amino acid to the pyridoxal phosphate cofactor to form pyridoxamine and an alpha-keto acid in the first half-reaction. The second half-reaction is the reverse of the first, transferring the amino group from the pyridoxamine to a second alpha-keto acid to form the product D-amino acid via a ping-pong mechanism. This is an important process in the formation of D-alanine and D-glutamate, which are essential bacterial cell wall components. The protein is D-alanine aminotransferase (dat) of Staphylococcus aureus (strain MW2).